Here is a 526-residue protein sequence, read N- to C-terminus: Dolichyl pyrophosphate Glc1Man9GlcNAc2 alpha-1,3-glucosyltransferase (526 aa).

The next 11 membrane-spanning stretches (helical) occupy residues Phe4 to Leu24, Leu103 to His122, Phe143 to Phe163, Gly188 to Ala208, Leu238 to Ala258, Pro334 to Cys354, Leu368 to Ala388, Val389 to Leu409, Leu427 to Phe449, Thr461 to Thr481, and Pro488 to Leu508.

It belongs to the ALG6/ALG8 glucosyltransferase family.

The protein resides in the endoplasmic reticulum membrane. The enzyme catalyses an alpha-D-Glc-(1-&gt;3)-alpha-D-Man-(1-&gt;2)-alpha-D-Man-(1-&gt;2)-alpha-D-Man-(1-&gt;3)-[alpha-D-Man-(1-&gt;2)-alpha-D-Man-(1-&gt;3)-[alpha-D-Man-(1-&gt;2)-alpha-D-Man-(1-&gt;6)]-alpha-D-Man-(1-&gt;6)]-beta-D-Man-(1-&gt;4)-beta-D-GlcNAc-(1-&gt;4)-alpha-D-GlcNAc-diphospho-di-trans,poly-cis-dolichol + a di-trans,poly-cis-dolichyl beta-D-glucosyl phosphate = an alpha-D-Glc-(1-&gt;3)-alpha-D-Glc-(1-&gt;3)-alpha-D-Man-(1-&gt;2)-alpha-D-Man-(1-&gt;2)-alpha-D-Man-(1-&gt;3)-[alpha-D-Man-(1-&gt;2)-alpha-D-Man-(1-&gt;3)-[alpha-D-Man-(1-&gt;2)-alpha-D-Man-(1-&gt;6)]-alpha-D-Man-(1-&gt;6)]-beta-D-Man-(1-&gt;4)-beta-D-GlcNAc-(1-&gt;4)-alpha-D-GlcNAc-diphospho-di-trans,poly-cis-dolichol + a di-trans,poly-cis-dolichyl phosphate + H(+). It participates in protein modification; protein glycosylation. Dolichyl pyrophosphate Glc1Man9GlcNAc2 alpha-1,3-glucosyltransferase that operates in the biosynthetic pathway of dolichol-linked oligosaccharides, the glycan precursors employed in protein asparagine (N)-glycosylation. The assembly of dolichol-linked oligosaccharides begins on the cytosolic side of the endoplasmic reticulum membrane and finishes in its lumen. The sequential addition of sugars to dolichol pyrophosphate produces dolichol-linked oligosaccharides containing fourteen sugars, including two GlcNAcs, nine mannoses and three glucoses. Once assembled, the oligosaccharide is transferred from the lipid to nascent proteins by oligosaccharyltransferases. In the lumen of the endoplasmic reticulum, adds the second glucose residue from dolichyl phosphate glucose (Dol-P-Glc) onto the lipid-linked oligosaccharide intermediate Glc(1)Man(9)GlcNAc(2)-PP-Dol to produce Glc(2)Man(9)GlcNAc(2)-PP-Dol. Glc(2)Man(9)GlcNAc(2)-PP-Dol is a substrate for ALG10, the following enzyme in the biosynthetic pathway. Required for PKD1/Polycystin-1 maturation and localization to the plasma membrane of the primary cilia. This is Dolichyl pyrophosphate Glc1Man9GlcNAc2 alpha-1,3-glucosyltransferase from Bos taurus (Bovine).